The sequence spans 345 residues: Protein RecA (345 aa).

Residue 81–88 (GPESSGKT) participates in ATP binding.

It belongs to the RecA family.

The protein resides in the cytoplasm. In terms of biological role, can catalyze the hydrolysis of ATP in the presence of single-stranded DNA, the ATP-dependent uptake of single-stranded DNA by duplex DNA, and the ATP-dependent hybridization of homologous single-stranded DNAs. It interacts with LexA causing its activation and leading to its autocatalytic cleavage. The polypeptide is Protein RecA (Mycoplasma mycoides).